Here is a 766-residue protein sequence, read N- to C-terminus: MDTGVVPEKKSRVSSDRRKEKSRDAARCRRGKESEVFYELAQELPLPHSVTSNLDKASIMRLAISYLHMRNLLSTDNEEEQEEREMDSQLNGSYLKAIEGFLMVLSEDGDMIYLSENVNKCLGLAQIDLTGLSVFEYTHPCDHEELREMLVHRTGTSKKSKEPNTERSFFLRMKCTLTNRGRTVNVKSATWKVLHCSDHVRVHESPAEQIPGGHKEPSVPYLVLVCDPIPHPSNIEAPLDTKTFLSRHTLDMKFTYCDERITELMGYDPEDLLNRSVYEYYHALDSDHLMKTHHNLFAKGQVSTGQYRMLAKRGGFVWVETQATVIYNNKNSQPQCVVCVNYVLSGIEEEKMMLSLEQTEDMRPVKKELEEEESSEPEVSPVLLKEEKSPELDVIKLFTRAVETQPLSSLYDRLKEEPEALTLLAPAAGDTIISLDFSSPDSDILQKEVPLYKDVMLPSTSDKLALPLSLLPPSDQHLVPNTSVDTTEVSTGPDSSSTPGSHSFTEPDSPLDFCFPMESDINAEFKLDMVETLFAINPEPKTPFTLQAMEDLDLEMLAPYIPMDDDFQLRTLSPEEPLSCGPAQPLECSSLCSSVRLTQEVHSYPGSPFNAPGSLTASPALAASPALAAPEPADSPCPASLLTKTVPQMDREISLRSLASQNAQRKRKMSLSQAVGIGGLLQDHPGPGKKLKVSELSHADAPFNRTILLLPTDLASRLLGISSEGSGSPFTLPQLTRYDCEVNAPVGGRQLLLQGEELLSALDQVN.

Residues 1–26 (MDTGVVPEKKSRVSSDRRKEKSRDAA) are disordered. A compositionally biased stretch (basic and acidic residues) spans 7-26 (PEKKSRVSSDRRKEKSRDAA). Residues 17-70 (RRKEKSRDAARCRRGKESEVFYELAQELPLPHSVTSNLDKASIMRLAISYLHMR) enclose the bHLH domain. 2 consecutive PAS domains span residues 82–159 (EERE…TSKK) and 230–300 (PHPS…FAKG). The PAC domain occupies 304–347 (TGQYRMLAKRGGFVWVETQATVIYNNKNSQPQCVVCVNYVLSGI). Positions 361 to 383 (DMRPVKKELEEEESSEPEVSPVL) are disordered. Proline 426 is subject to 4-hydroxyproline. A disordered region spans residues 475 to 509 (DQHLVPNTSVDTTEVSTGPDSSSTPGSHSFTEPDS). Polar residues predominate over residues 479–489 (VPNTSVDTTEV). A compositionally biased stretch (low complexity) spans 490–503 (STGPDSSSTPGSHS). Position 559 is a 4-hydroxyproline (proline 559). The Nuclear localization signal motif lies at 718–721 (LLGI). Asparagine 743 carries the post-translational modification (3S)-3-hydroxyasparagine.

As to quaternary structure, efficient DNA binding requires heterodimerization of an alpha and a beta/ARNT subunit. In normoxia, is hydroxylated on Pro-426 and Pro-559. The hydroxylated prolines promote interaction with VHL, initiating rapid ubiquitination and subsequent proteasomal degradation. Under hypoxia, proline hydroxylation is impaired and ubiquitination is attenuated, resulting in stabilization. Post-translationally, in normoxia, is hydroxylated on Asn-743, thus abrogating interaction with CREBBP and EP300 and preventing transcriptional activation. In terms of processing, the iron and 2-oxoglutarate dependent 3-hydroxylation of asparagine is (S) stereospecific within HIF CTAD domains.

It localises to the cytoplasm. Its subcellular location is the nucleus. The protein localises to the nucleus speckle. With respect to regulation, induced by reactive oxygen species (ROS). Functionally, functions as a master transcriptional regulator of the adaptive response to hypoxia. Under hypoxic conditions, activates the transcription of over 40 genes, including erythropoietin, glucose transporters, glycolytic enzymes, vascular endothelial growth factor, HILPDA, and other genes whose protein products increase oxygen delivery or facilitate metabolic adaptation to hypoxia. Plays an essential role in embryonic vascularization, tumor angiogenesis and pathophysiology of ischemic disease. The sequence is that of Hypoxia-inducible factor 1-alpha (hif1a) from Oncorhynchus mykiss (Rainbow trout).